Here is a 154-residue protein sequence, read N- to C-terminus: MFILRLFSPAFGEIEADESQIFSFPEGLPGFSHLKKFLLIRHRDNSPFFFLIAIDEPEIYFILIEPSRLLADYHVELSCEQQGLLHLSEETPVLSLNIVRIPPEAKEMIINLKAPVVFNLQEKIARQIILDADYPVRYPIPLSKVKEKADAGTK.

It belongs to the FliW family. Interacts with translational regulator CsrA and flagellin(s).

It localises to the cytoplasm. In terms of biological role, acts as an anti-CsrA protein, binds CsrA and prevents it from repressing translation of its target genes, one of which is flagellin. Binds to flagellin and participates in the assembly of the flagellum. The sequence is that of Flagellar assembly factor FliW from Carboxydothermus hydrogenoformans (strain ATCC BAA-161 / DSM 6008 / Z-2901).